A 68-amino-acid chain; its full sequence is MKSKDYVQELNGLTTDKLLDREKELKEQLFNLRFQLATGQLENTASLKQVRKDIARVKTVLRQQELNK.

The protein belongs to the universal ribosomal protein uL29 family.

The protein is Large ribosomal subunit protein uL29 of Limosilactobacillus reuteri (strain DSM 20016) (Lactobacillus reuteri).